Consider the following 367-residue polypeptide: Phosphoribosylaminoimidazole-succinocarboxamide synthase (367 aa).

It belongs to the SAICAR synthetase family.

It catalyses the reaction 5-amino-1-(5-phospho-D-ribosyl)imidazole-4-carboxylate + L-aspartate + ATP = (2S)-2-[5-amino-1-(5-phospho-beta-D-ribosyl)imidazole-4-carboxamido]succinate + ADP + phosphate + 2 H(+). It participates in purine metabolism; IMP biosynthesis via de novo pathway; 5-amino-1-(5-phospho-D-ribosyl)imidazole-4-carboxamide from 5-amino-1-(5-phospho-D-ribosyl)imidazole-4-carboxylate: step 1/2. In Shewanella pealeana (strain ATCC 700345 / ANG-SQ1), this protein is Phosphoribosylaminoimidazole-succinocarboxamide synthase.